The following is a 426-amino-acid chain: Serine--tRNA ligase (426 aa).

Position 233–235 (233–235) interacts with L-serine; sequence TAE. An ATP-binding site is contributed by 264–266; sequence RSE. L-serine is bound at residue Glu-287. 351-354 serves as a coordination point for ATP; sequence EISS. Ser-387 contributes to the L-serine binding site.

This sequence belongs to the class-II aminoacyl-tRNA synthetase family. Type-1 seryl-tRNA synthetase subfamily. Homodimer. The tRNA molecule binds across the dimer.

The protein resides in the cytoplasm. The enzyme catalyses tRNA(Ser) + L-serine + ATP = L-seryl-tRNA(Ser) + AMP + diphosphate + H(+). It catalyses the reaction tRNA(Sec) + L-serine + ATP = L-seryl-tRNA(Sec) + AMP + diphosphate + H(+). It participates in aminoacyl-tRNA biosynthesis; selenocysteinyl-tRNA(Sec) biosynthesis; L-seryl-tRNA(Sec) from L-serine and tRNA(Sec): step 1/1. In terms of biological role, catalyzes the attachment of serine to tRNA(Ser). Is also able to aminoacylate tRNA(Sec) with serine, to form the misacylated tRNA L-seryl-tRNA(Sec), which will be further converted into selenocysteinyl-tRNA(Sec). This chain is Serine--tRNA ligase, found in Pseudomonas paraeruginosa (strain DSM 24068 / PA7) (Pseudomonas aeruginosa (strain PA7)).